A 266-amino-acid polypeptide reads, in one-letter code: Glucagon-1 (266 aa).

The signal sequence occupies residues 1–20 (MKSTCYMIGILLMILQNTYQ). 6 propeptides span residues 21–50 (SPVP…LKEV), 84–95 (SGELSRRNADYE), 136–140 (NAEFE), 175–178 (IRYS), 213–224 (NFSEVHSVEEMD), and 261–266 (DLLEEQ). Residues 23-32 (VPETDANSRS) are compositionally biased toward polar residues. The tract at residues 23-44 (VPETDANSRSVKAARNEAVDDS) is disordered.

The protein belongs to the glucagon family.

The protein localises to the secreted. Its function is as follows. Promotes hydrolysis of glycogen and lipids, and raises the blood sugar level. In Xenopus laevis (African clawed frog), this protein is Glucagon-1 (gcg1).